A 500-amino-acid chain; its full sequence is Protein nucleotidyltransferase YdiU (500 aa).

Positions 98, 100, 101, 124, 136, 137, 187, and 194 each coordinate ATP. Asp-263 (proton acceptor) is an active-site residue. Positions 264 and 273 each coordinate Mg(2+). ATP is bound at residue Asp-273.

This sequence belongs to the SELO family. Mg(2+) serves as cofactor. Requires Mn(2+) as cofactor.

The enzyme catalyses L-seryl-[protein] + ATP = 3-O-(5'-adenylyl)-L-seryl-[protein] + diphosphate. It carries out the reaction L-threonyl-[protein] + ATP = 3-O-(5'-adenylyl)-L-threonyl-[protein] + diphosphate. The catalysed reaction is L-tyrosyl-[protein] + ATP = O-(5'-adenylyl)-L-tyrosyl-[protein] + diphosphate. It catalyses the reaction L-histidyl-[protein] + UTP = N(tele)-(5'-uridylyl)-L-histidyl-[protein] + diphosphate. The enzyme catalyses L-seryl-[protein] + UTP = O-(5'-uridylyl)-L-seryl-[protein] + diphosphate. It carries out the reaction L-tyrosyl-[protein] + UTP = O-(5'-uridylyl)-L-tyrosyl-[protein] + diphosphate. Nucleotidyltransferase involved in the post-translational modification of proteins. It can catalyze the addition of adenosine monophosphate (AMP) or uridine monophosphate (UMP) to a protein, resulting in modifications known as AMPylation and UMPylation. The polypeptide is Protein nucleotidyltransferase YdiU (Herminiimonas arsenicoxydans).